The sequence spans 185 residues: Threonylcarbamoyl-AMP synthase (185 aa).

A YrdC-like domain is found at 4–185; that stretch reads SWRVQQAARE…LATGNIVRPA (182 aa).

It belongs to the SUA5 family. TsaC subfamily.

The protein localises to the cytoplasm. It carries out the reaction L-threonine + hydrogencarbonate + ATP = L-threonylcarbamoyladenylate + diphosphate + H2O. In terms of biological role, required for the formation of a threonylcarbamoyl group on adenosine at position 37 (t(6)A37) in tRNAs that read codons beginning with adenine. Catalyzes the conversion of L-threonine, HCO(3)(-)/CO(2) and ATP to give threonylcarbamoyl-AMP (TC-AMP) as the acyladenylate intermediate, with the release of diphosphate. The sequence is that of Threonylcarbamoyl-AMP synthase from Pseudomonas fluorescens (strain Pf0-1).